The following is a 305-amino-acid chain: Virulence plasmid integrase pGP7-D (305 aa).

The 87-residue stretch at 13–99 folds into the Core-binding (CB) domain; that stretch reads LTFGDASEIW…CYISFTKFLY (87 aa). The 179-residue stretch at 127–305 folds into the Tyr recombinase domain; that stretch reads IKTESISKQE…SPLVQTPPIL (179 aa). Catalysis depends on residues lysine 188 and arginine 257. The active-site O-(3'-phospho-DNA)-tyrosine intermediate is tyrosine 289.

This sequence belongs to the 'phage' integrase family.

The protein is Virulence plasmid integrase pGP7-D of Chlamydia trachomatis serovar L2 (strain ATCC VR-902B / DSM 19102 / 434/Bu).